The sequence spans 477 residues: Adenylyl cyclase-associated protein 2 (477 aa).

The residue at position 2 (alanine 2) is an N-acetylalanine. 2 disordered regions span residues 224–262 (SILSSGPGLPPPPPPPPPPGPPPPFENEGGKEEPSPSRS) and 274–324 (ITKG…HAPV). Pro residues predominate over residues 231–248 (GLPPPPPPPPPPGPPPPF). The segment covering 300–318 (RSPTKTRTPSPTSSKSNSP) has biased composition (low complexity). Serine 301 and serine 309 each carry phosphoserine. The region spanning 318–455 (PQKHAPVLEL…QGDDYREFPI (138 aa)) is the C-CAP/cofactor C-like domain.

This sequence belongs to the CAP family. In terms of tissue distribution, found at relatively high levels in testes, at moderate levels in brain, heart and skeletal muscle, at lower levels in lung, skin, kidney and small intestine, and is undetectable in liver or spleen.

It is found in the cell membrane. Functionally, involved in the regulation of actin polymerization. This chain is Adenylyl cyclase-associated protein 2 (Cap2), found in Rattus norvegicus (Rat).